The following is a 389-amino-acid chain: Chorismate synthase (389 aa).

NADP(+) contacts are provided by arginine 40 and arginine 46. Residues 130–132 (RAS), 251–252 (QA), glycine 297, 312–316 (KPIST), and arginine 338 each bind FMN.

It belongs to the chorismate synthase family. In terms of assembly, homotetramer. FMNH2 is required as a cofactor.

The catalysed reaction is 5-O-(1-carboxyvinyl)-3-phosphoshikimate = chorismate + phosphate. Its pathway is metabolic intermediate biosynthesis; chorismate biosynthesis; chorismate from D-erythrose 4-phosphate and phosphoenolpyruvate: step 7/7. Catalyzes the anti-1,4-elimination of the C-3 phosphate and the C-6 proR hydrogen from 5-enolpyruvylshikimate-3-phosphate (EPSP) to yield chorismate, which is the branch point compound that serves as the starting substrate for the three terminal pathways of aromatic amino acid biosynthesis. This reaction introduces a second double bond into the aromatic ring system. This Solibacter usitatus (strain Ellin6076) protein is Chorismate synthase.